The following is a 581-amino-acid chain: NADH-quinone oxidoreductase subunit C/D (581 aa).

Positions 1 to 172 are NADH dehydrogenase I subunit C; the sequence is MSGAELISDL…PPFVMTAARF (172 aa). The interval 196 to 581 is NADH dehydrogenase I subunit D; the sequence is ELMILNYGPH…IDYVMSDVDR (386 aa).

The protein in the N-terminal section; belongs to the complex I 30 kDa subunit family. This sequence in the C-terminal section; belongs to the complex I 49 kDa subunit family. In terms of assembly, NDH-1 is composed of 13 different subunits. Subunits NuoB, CD, E, F, and G constitute the peripheral sector of the complex.

Its subcellular location is the cell inner membrane. The enzyme catalyses a quinone + NADH + 5 H(+)(in) = a quinol + NAD(+) + 4 H(+)(out). NDH-1 shuttles electrons from NADH, via FMN and iron-sulfur (Fe-S) centers, to quinones in the respiratory chain. The immediate electron acceptor for the enzyme in this species is believed to be ubiquinone. Couples the redox reaction to proton translocation (for every two electrons transferred, four hydrogen ions are translocated across the cytoplasmic membrane), and thus conserves the redox energy in a proton gradient. This Rhodopseudomonas palustris (strain BisA53) protein is NADH-quinone oxidoreductase subunit C/D.